A 287-amino-acid polypeptide reads, in one-letter code: uncharacterized protein (287 aa).

GTP-binding positions include glycine 43–serine 50, aspartate 90–glycine 93, and aspartate 156–glutamate 159. The 93-residue stretch at glycine 48–isoleucine 140 folds into the G domain.

To E.coli YkfA and YeeP.

This is an uncharacterized protein from Escherichia coli (strain K12).